The primary structure comprises 462 residues: UDP-N-acetylmuramate--L-alanine ligase (462 aa).

Residue glycine 116–threonine 122 participates in ATP binding.

The protein belongs to the MurCDEF family.

It localises to the cytoplasm. The enzyme catalyses UDP-N-acetyl-alpha-D-muramate + L-alanine + ATP = UDP-N-acetyl-alpha-D-muramoyl-L-alanine + ADP + phosphate + H(+). Its pathway is cell wall biogenesis; peptidoglycan biosynthesis. Functionally, cell wall formation. The polypeptide is UDP-N-acetylmuramate--L-alanine ligase (Desulforamulus reducens (strain ATCC BAA-1160 / DSM 100696 / MI-1) (Desulfotomaculum reducens)).